Here is an 81-residue protein sequence, read N- to C-terminus: Beta-catenin-interacting protein 1 (81 aa).

Residue S59 is modified to Phosphoserine.

It belongs to the CTNNBIP1 family. As to quaternary structure, binds CTNNB1. Highly expressed in heart, brain, liver and skeletal muscle. Detected at low levels in kidney, testis and lung.

The protein resides in the cytoplasm. Its subcellular location is the nucleus. Functionally, prevents the interaction between CTNNB1 and TCF family members, and acts as a negative regulator of the Wnt signaling pathway. The chain is Beta-catenin-interacting protein 1 (Ctnnbip1) from Mus musculus (Mouse).